Reading from the N-terminus, the 202-residue chain is LexA repressor (202 aa).

Residues 28-48 constitute a DNA-binding region (H-T-H motif); sequence RAEIAQQLGFRSPNAAEEHLK. Active-site for autocatalytic cleavage activity residues include Ser-119 and Lys-156.

The protein belongs to the peptidase S24 family. Homodimer.

The catalysed reaction is Hydrolysis of Ala-|-Gly bond in repressor LexA.. In terms of biological role, represses a number of genes involved in the response to DNA damage (SOS response), including recA and lexA. Binds to the 16 bp palindromic sequence 5'-CTGTATATATATACAG-3'. In the presence of single-stranded DNA, RecA interacts with LexA causing an autocatalytic cleavage which disrupts the DNA-binding part of LexA, leading to derepression of the SOS regulon and eventually DNA repair. The protein is LexA repressor of Pectobacterium carotovorum subsp. carotovorum (strain PC1).